The sequence spans 115 residues: U3-lycotoxin-Ls1q (115 aa).

Residues Met-1–Ala-20 form the signal peptide. The propeptide occupies Glu-21 to Arg-44. 4 disulfides stabilise this stretch: Cys-48/Cys-63, Cys-55/Cys-72, Cys-62/Cys-87, and Cys-74/Cys-85.

The protein belongs to the neurotoxin 19 (CSTX) family. 01 subfamily. In terms of tissue distribution, expressed by the venom gland.

Its subcellular location is the secreted. The sequence is that of U3-lycotoxin-Ls1q from Lycosa singoriensis (Wolf spider).